The sequence spans 100 residues: Large ribosomal subunit protein bL21 (100 aa).

It belongs to the bacterial ribosomal protein bL21 family. As to quaternary structure, part of the 50S ribosomal subunit. Contacts proteins L15 and L20.

Its function is as follows. Binds directly to 23S rRNA, probably serving to organize its structure. This is Large ribosomal subunit protein bL21 from Deinococcus radiodurans (strain ATCC 13939 / DSM 20539 / JCM 16871 / CCUG 27074 / LMG 4051 / NBRC 15346 / NCIMB 9279 / VKM B-1422 / R1).